The following is a 66-amino-acid chain: Toxin Boma6a (66 aa).

Residues 2 to 64 (RDAYIAQNYN…VPIKVEGKCH (63 aa)) form the LCN-type CS-alpha/beta domain. Disulfide bonds link C12-C63, C16-C36, C22-C46, and C26-C48.

Belongs to the long (4 C-C) scorpion toxin superfamily. Sodium channel inhibitor family. Alpha subfamily. As to expression, expressed by the venom gland.

It localises to the secreted. Functionally, alpha toxins bind voltage-independently at site-3 of sodium channels (Nav) and inhibit the inactivation of the activated channels, thereby blocking neuronal transmission. The sequence is that of Toxin Boma6a from Buthus occitanus mardochei (Moroccan scorpion).